The sequence spans 196 residues: Peptidyl-tRNA hydrolase (196 aa).

Tyr17 is a tRNA binding site. The active-site Proton acceptor is the His22. The tRNA site is built by Phe68, Asn70, and Asn116.

It belongs to the PTH family. As to quaternary structure, monomer.

Its subcellular location is the cytoplasm. It catalyses the reaction an N-acyl-L-alpha-aminoacyl-tRNA + H2O = an N-acyl-L-amino acid + a tRNA + H(+). In terms of biological role, hydrolyzes ribosome-free peptidyl-tRNAs (with 1 or more amino acids incorporated), which drop off the ribosome during protein synthesis, or as a result of ribosome stalling. Its function is as follows. Catalyzes the release of premature peptidyl moieties from peptidyl-tRNA molecules trapped in stalled 50S ribosomal subunits, and thus maintains levels of free tRNAs and 50S ribosomes. This chain is Peptidyl-tRNA hydrolase, found in Yersinia pestis bv. Antiqua (strain Antiqua).